The sequence spans 96 residues: SAGA complex subunit SUS1 (96 aa).

A Glycyl lysine isopeptide (Lys-Gly) (interchain with G-Cter in ubiquitin) cross-link involves residue lysine 68.

Belongs to the ENY2 family. As to quaternary structure, component of the 1.8 MDa SAGA (Spt-Ada-Gcn5 acetyltransferase) complex, which is composed of 19 subunits TRA1, SPT7, TAF5, NGG1/ADA3, SGF73, SPT20/ADA5, SPT8, TAF12, TAF6, HFI1/ADA1, UBP8, GCN5, ADA2, SPT3, SGF29, TAF10, TAF9, SGF11 and SUS1. The SAGA complex is composed of 4 modules, namely the HAT (histone acetyltransferase) module (GCN5, ADA2, NGG1/ADA3 and SGF29), the DUB (deubiquitinating) module (UBP8, SGF11, SGF73 and SUS1), the core or TAF (TBP-associated factor) module (TAF5, TAF6, TAF9, TAF10 and TAF12), and the Tra1 or SPT (Suppressor of Ty) module (TRA1, HFI1/ADA1, SPT3, SPT7, SPT8 and SPT20/ADA5). The Tra1/SPT module binds activators, the core module recruits TBP (TATA-binding protein), the HAT module contains the histone H3 acetyltransferase GCN5, and the DUB module comprises the histone H2B deubiquitinase UBP8. Also identified in an altered form of SAGA, named SALSA (SAGA altered, Spt8 absent) or SLIK (SAGA-like) complex, which contains a C-terminal truncated form of SPT7 and is missing SPT8. However, it has been shown that the SAGA and SAGA-like SALSA/SLIK transcriptional coactivators are structurally and biochemically equivalent. Component of the nuclear pore complex (NPC)-associated TREX-2 complex (transcription and export complex 2), composed of at least SUS1, SAC3, THP1, SEM1, and CDC31. TREX-2 contains 2 SUS1 chains. The TREX-2 complex interacts with the mRNA export factors MEX67, MTR2 and SUB2, and the nucleoporin NUP1. Interacts directly with THP1, SAC3. Interacts directly with SGF11 and UBP8. Interacts with YRA1, MEX67 and with the RNA polymerase II.

The protein localises to the nucleus. It localises to the nucleoplasm. It is found in the cytoplasm. The protein resides in the P-body. In terms of biological role, involved in mRNA export coupled transcription activation by association with both the TREX-2 and the SAGA complexes. SAGA acts as a general cofactor required for essentially all RNA polymerase II transcription. At the promoters, SAGA is required for transcription pre-initiation complex (PIC) recruitment. It influences RNA polymerase II transcriptional activity through different activities such as TBP interaction (via core/TAF module) and promoter selectivity, interaction with transcription activators (via Tra1/SPT module), and chromatin modification through histone acetylation (via HAT module) and deubiquitination (via DUB module). SAGA preferentially acetylates histones H3 (to form H3K9ac, H3K14ac, H3K18ac and H3K23ac) and H2B and deubiquitinates histone H2B. SAGA interacts with DNA via upstream activating sequences (UASs). Also identified in a modified version of SAGA named SALSA or SLIK. The cleavage of SPT7 and the absence of the SPT8 subunit in SLIK neither drive any major conformational differences in its structure compared with SAGA, nor significantly affect HAT, DUB, or DNA-binding activities. Within the SAGA complex, participates in a subcomplex with SGF11, SGF73 and UBP8 required for deubiquitination of H2B and for the maintenance of steady-state H3 methylation levels. The TREX-2 complex functions in docking export-competent ribonucleoprotein particles (mRNPs) to the nuclear entrance of the nuclear pore complex (nuclear basket), by association with components of the nuclear mRNA export machinery (MEX67-MTR2 and SUB2) in the nucleoplasm and the nucleoporin NUP1 at the nuclear basket. TREX-2 participates in mRNA export and accurate chromatin positioning in the nucleus by tethering genes to the nuclear periphery. SUS1 also has a role in mRNP biogenesis and maintenance of genome integrity through preventing RNA-mediated genome instability. Has a role in response to DNA damage induced by methyl methane sulfonate (MMS) and replication arrest induced by hydroxyurea. May also be involved in cytoplasmic mRNA decay by interaction with components of P-bodies. The chain is SAGA complex subunit SUS1 from Saccharomyces cerevisiae (strain ATCC 204508 / S288c) (Baker's yeast).